The chain runs to 281 residues: NADPH-dependent 7-cyano-7-deazaguanine reductase (281 aa).

A substrate-binding site is contributed by 87–89 (IES). Residue 89 to 90 (SK) participates in NADPH binding. The active-site Thioimide intermediate is the cysteine 188. Aspartate 195 serves as the catalytic Proton donor. 227–228 (HE) contributes to the substrate binding site. 256–257 (RG) contacts NADPH.

It belongs to the GTP cyclohydrolase I family. QueF type 2 subfamily. In terms of assembly, homodimer.

Its subcellular location is the cytoplasm. The catalysed reaction is 7-aminomethyl-7-carbaguanine + 2 NADP(+) = 7-cyano-7-deazaguanine + 2 NADPH + 3 H(+). Its pathway is tRNA modification; tRNA-queuosine biosynthesis. In terms of biological role, catalyzes the NADPH-dependent reduction of 7-cyano-7-deazaguanine (preQ0) to 7-aminomethyl-7-deazaguanine (preQ1). The polypeptide is NADPH-dependent 7-cyano-7-deazaguanine reductase (Photobacterium profundum (strain SS9)).